Reading from the N-terminus, the 204-residue chain is uncharacterized protein (204 aa).

Residues 160 to 180 (GLTVAAIASVVVAGAVTYLVV) traverse the membrane as a helical segment.

To M.pneumoniae MPN_373 C-terminal region.

It is found in the cell membrane. This is an uncharacterized protein from Mycoplasma pneumoniae (strain ATCC 29342 / M129 / Subtype 1) (Mycoplasmoides pneumoniae).